The primary structure comprises 467 residues: uncharacterized protein (467 aa).

Sel1-like repeat units lie at residues 38-73 (PAAAFELAKHLMDADSPYQDREQGMEMLRIAAEQGH), 107-138 (PEAQVRLMYLLYASRHFEEALEWAKTSAKNNN), 139-172 (PHGQYLLAQYCRYGTPPDFETAHLLYRKSAAQGL), 173-208 (PEAHWQLGLQYRFGQGTKVDTAQAVNHLRAAAQQGY), 240-275 (PDAHAALADIYLQGKHLERNHKLALHHAEAAAAERH), 276-311 (PEGLRILGDICRYGLGIAPDTEKARHYYRQAAEAGS), 343-378 (AERLYQKAQALHYGLQCAPEYAAALKLYTEAAELGH), 379-414 (SKAQTNLGSMYYFGQGMTADYNEARKWFEKAAAKKD), and 415-450 (SMAFYNLACIHYSGHGVEPDKEKACRYLQEAINNGY).

This is an uncharacterized protein from Neisseria meningitidis serogroup B (strain ATCC BAA-335 / MC58).